The sequence spans 443 residues: 3-isopropylmalate dehydratase large subunit (443 aa).

The [4Fe-4S] cluster site is built by C347, C407, and C410.

Belongs to the aconitase/IPM isomerase family. LeuC type 1 subfamily. Heterodimer of LeuC and LeuD. Requires [4Fe-4S] cluster as cofactor.

It carries out the reaction (2R,3S)-3-isopropylmalate = (2S)-2-isopropylmalate. It functions in the pathway amino-acid biosynthesis; L-leucine biosynthesis; L-leucine from 3-methyl-2-oxobutanoate: step 2/4. In terms of biological role, catalyzes the isomerization between 2-isopropylmalate and 3-isopropylmalate, via the formation of 2-isopropylmaleate. The polypeptide is 3-isopropylmalate dehydratase large subunit (Buchnera aphidicola subsp. Uroleucon sonchi).